The chain runs to 840 residues: Axin-2 (840 aa).

The segment at 1–75 (MSSAVLVTLL…EGRASPDSPL (75 aa)) is disordered. A Tankyrase-binding motif motif is present at residues 21–30 (APRPPVPGEE). The segment covering 42-55 (KVQSTKPMPVSSNA) has biased composition (polar residues). Basic and acidic residues predominate over residues 56–69 (RRNEDGLGEPEGRA). One can recognise an RGS domain in the interval 81–200 (SLHSLLGDQD…LTSDIYLEYV (120 aa)). Disordered stretches follow at residues 300-363 (SELS…KEMT), 398-435 (IREDEEKEGSEQALSSRDGAPVQHPLALLPSGSYEEDP), 447-485 (LKTPGCQSPGVGRYSPRSRSPDHHHQHHHHQQCHTLLPT), 572-614 (RGGT…GDRS), and 715-745 (ASQQRDRNHSAAGQAGASPFANPSLAPEDHK). The segment covering 303–318 (SSDALTDDSMSMTDSS) has biased composition (low complexity). The interaction with GSK3B stretch occupies residues 327–413 (MGSKKQLQRE…KEGSEQALSS (87 aa)). The interaction with beta-catenin stretch occupies residues 413–478 (SRDGAPVQHP…HHHQHHHHQQ (66 aa)). The segment covering 468-478 (DHHHQHHHHQQ) has biased composition (basic residues). Residues 758–840 (ASELVVTYFF…RILGKVERID (83 aa)) form the DIX domain.

Interacts with glycogen synthase kinase-3 beta (GSK3B) and beta-catenin. The interaction between axin and beta-catenin occurs via the armadillo repeats contained in beta-catenin. Interacts with SMAD7 and RNF111. Interacts with ANKRD6. Interacts with SIAH1. Interacts with SIAH2. Post-translationally, ADP-ribosylated by tankyrase TNKS and TNKS2. Poly-ADP-ribosylated protein is recognized by RNF146, followed by ubiquitination and subsequent activation of the Wnt signaling pathway. In terms of processing, ubiquitinated by RNF146 when poly-ADP-ribosylated, leading to its degradation and subsequent activation of the Wnt signaling pathway. Deubiquitinated by USP34, deubiquitinated downstream of beta-catenin stabilization step: deubiquitination is important Wnt signaling to positively regulate beta-catenin (CTNBB1)-mediated transcription. Probably phosphorylated by GSK3B and dephosphorylated by PP2A. Expressed in Tcf7-positive innate-like T-cells (at protein level).

The protein localises to the cytoplasm. Functionally, inhibitor of the Wnt signaling pathway. Down-regulates beta-catenin. Probably facilitate the phosphorylation of beta-catenin and APC by GSK3B. This is Axin-2 from Mus musculus (Mouse).